The sequence spans 901 residues: HTH-type transcriptional regulator MalT (901 aa).

39–46 (SPAGYGKT) is an ATP binding site. The HTH luxR-type domain occupies 829-894 (ELIRTSPLTQ…DAVQHAQQLL (66 aa)). A DNA-binding region (H-T-H motif) is located at residues 853–872 (NEQIAGELAVAATTIKTHIR).

The protein belongs to the MalT family. Monomer in solution. Oligomerizes to an active state in the presence of the positive effectors ATP and maltotriose.

Its activity is regulated as follows. Activated by ATP and maltotriose, which are both required for DNA binding. Its function is as follows. Positively regulates the transcription of the maltose regulon whose gene products are responsible for uptake and catabolism of malto-oligosaccharides. Specifically binds to the promoter region of its target genes, recognizing a short DNA motif called the MalT box. The polypeptide is HTH-type transcriptional regulator MalT (Salmonella typhi).